We begin with the raw amino-acid sequence, 923 residues long: Protein translocase subunit SecA (923 aa).

Residues Q86, 104–108 (GEGKT), and D512 each bind ATP. Zn(2+) contacts are provided by C906, C908, C917, and H918.

This sequence belongs to the SecA family. As to quaternary structure, monomer and homodimer. Part of the essential Sec protein translocation apparatus which comprises SecA, SecYEG and auxiliary proteins SecDF-YajC and YidC. Zn(2+) serves as cofactor.

It is found in the cell inner membrane. It localises to the cytoplasm. The catalysed reaction is ATP + H2O + cellular proteinSide 1 = ADP + phosphate + cellular proteinSide 2.. Functionally, part of the Sec protein translocase complex. Interacts with the SecYEG preprotein conducting channel. Has a central role in coupling the hydrolysis of ATP to the transfer of proteins into and across the cell membrane, serving both as a receptor for the preprotein-SecB complex and as an ATP-driven molecular motor driving the stepwise translocation of polypeptide chains across the membrane. This is Protein translocase subunit SecA from Caulobacter vibrioides (strain ATCC 19089 / CIP 103742 / CB 15) (Caulobacter crescentus).